The sequence spans 208 residues: Protein-L-isoaspartate O-methyltransferase (208 aa).

S59 is an active-site residue.

This sequence belongs to the methyltransferase superfamily. L-isoaspartyl/D-aspartyl protein methyltransferase family.

Its subcellular location is the cytoplasm. The catalysed reaction is [protein]-L-isoaspartate + S-adenosyl-L-methionine = [protein]-L-isoaspartate alpha-methyl ester + S-adenosyl-L-homocysteine. Functionally, catalyzes the methyl esterification of L-isoaspartyl residues in peptides and proteins that result from spontaneous decomposition of normal L-aspartyl and L-asparaginyl residues. It plays a role in the repair and/or degradation of damaged proteins. This chain is Protein-L-isoaspartate O-methyltransferase, found in Vibrio atlanticus (strain LGP32) (Vibrio splendidus (strain Mel32)).